We begin with the raw amino-acid sequence, 490 residues long: Transmembrane protease serine 2 (490 aa).

Residues 1 to 83 (MALNSGSPPG…ALCTSKSKKS (83 aa)) are Cytoplasmic-facing. A helical; Signal-anchor for type II membrane protein transmembrane segment spans residues 84-104 (LCLALALGTVLTGAAVAAVLL). At 105–490 (WRFWDSNCST…WIYQQMRANS (386 aa)) the chain is on the extracellular side. Residue N111 is glycosylated (N-linked (GlcNAc...) asparagine). The LDL-receptor class A domain occupies 111–149 (NCSTSEMECGSSGTCISSSLWCDGVAHCPNGEDENRCVR). 9 disulfides stabilise this stretch: C112-C125, C119-C138, C132-C147, C171-C230, C184-C240, C243-C363, C279-C295, C408-C424, and C435-C463. 4 residues coordinate Ca(2+): D133, V135, D143, and E144. Positions 150-242 (LYGQSFILQV…RMVVSLRCIE (93 aa)) constitute an SRCR domain. N212 carries an N-linked (GlcNAc...) asparagine glycan. In terms of domain architecture, Peptidase S1 spans 254-487 (IVGGLNASPG…FTDWIYQQMR (234 aa)). Catalysis depends on charge relay system residues H294 and D343. The Charge relay system role is filled by S439. An N-linked (GlcNAc...) asparagine glycan is attached at N474.

It belongs to the peptidase S1 family. The catalytically active form interacts with ACE2. In terms of processing, proteolytically processed; by an autocatalytic mechanism. Autocleavage induces active conformation. In terms of tissue distribution, larynx, trachea and bronchi, lung, prostate and kidney.

The protein resides in the cell membrane. It localises to the secreted. The enzyme catalyses The enzyme cleaves angiotensin-converting enzyme 2 (EC 3.4.17.23) and cleaves influenzea A and B virus and coronavirus spike glycoproteins at arginine residues.. Its function is as follows. Plasma membrane-anchored serine protease that cleaves at arginine residues. Participates in proteolytic cascades of relevance for the normal physiologic function of the prostate. Androgen-induced TMPRSS2 activates several substrates that include pro-hepatocyte growth factor/HGF, the protease activated receptor-2/F2RL1 or matriptase/ST14 leading to extracellular matrix disruption. In addition, activates trigeminal neurons and contribute to both spontaneous pain and mechanical allodynia. Functionally, (Microbial infection) Essential for spread and pathogenesis of influenza A virus (strains H1N1, H3N2 and H7N9) and is involved in proteolytic cleavage and activation of hemagglutinin (HA) protein which is essential for viral infectivity. This chain is Transmembrane protease serine 2 (Tmprss2), found in Mus musculus (Mouse).